A 1981-amino-acid chain; its full sequence is Nonribosomal peptide synthetase rstn8 (1981 aa).

Positions 251 to 638 (SYAALEQESA…ELGEIEYQAS (388 aa)) are adenylation. The 78-residue stretch at 763–840 (HHAGQKYDEM…ELFHRSQKTP (78 aa)) folds into the Carrier 1 domain. Residue Ser-800 is modified to O-(pantetheine 4'-phosphoryl)serine. Residues 883–1293 (EDIYPCSPLQ…DASMGTILSQ (411 aa)) are condensation 1. In terms of domain architecture, Carrier 2 spans 1438–1514 (EPLLPLEATL…CLASTLNSRP (77 aa)). O-(pantetheine 4'-phosphoryl)serine is present on Ser-1475. Positions 1586 to 1978 (EEQIDLVSFA…TFAQSIERII (393 aa)) are condensation 1. A disordered region spans residues 1754-1774 (HHHHQHEGRQHHGASETNGNR).

It belongs to the NRP synthetase family. Pantetheine 4'-phosphate serves as cofactor.

The catalysed reaction is 2 L-tryptophan = cyclo(L-Trp-L-Trp) + 2 H2O. Its pathway is alkaloid biosynthesis. Nonribosomal peptide synthetase; part of the gene cluster that mediates the biosynthesis of okaramine B, a prenylated indole alkaloid that possesses an unusual octacyclic ring system, including a four-membered azetidine ring and an eight-membered azocine ring, and that exhibits insecticidal activity against silkworm larvae. Within the pathway, okaA acts as a bimodular non-ribosomal peptide synthetase (NRPS) that condenses two tryptophan molecules into cyclo(L-Trp-L-Trp). Prenylation by the prenyltransferase okaC then leads to the formation of cyclo(N8-(alpha,alpha-dimethylallyl)-L-Trp-6a-(alpha,alpha-dime-thylallyl)-L-Trp). This is followed by indole 2,3-epoxidation by the FAD-dependent monooxygenase okaB to facilitate the formation of the hexahydropyrrolo[2,3-b]indole (HPI) moiety of okaramine C. The cytochrome P450 monooxygenase okaD then likely catalyzes formation of the eight-membered ring of okaramine A. The dioxygenase okaE further forms the unusual 2-dimethyl-3-methyl-azetidine ring to yield 12-deshydroxyl okaramine E, as well as the hydroxylation of 12-deshydroxyl okaramine E to produce okaramine E. The cytochrome P450 monoxygenase okaG converts 12-deshydroxyl okaramine E into 3-desmethyl okaramine B which is further methylated by the methyltransferase okaF into okaramine B. In a shunt pathway, okaG and okaF together are also able to convert okaramine E into okaramine D. Okaramine H is produced by nonenzymatic conversion from okaramine A. This chain is Nonribosomal peptide synthetase rstn8, found in Penicillium ochrochloron.